Reading from the N-terminus, the 2207-residue chain is Desmoplakin-B (2207 aa).

Coiled coils occupy residues 506-916, 952-1000, and 1029-1063; these read MEEL…EAGK, AKHA…EQGR, and TERL…LLKN. Positions 905 to 924 are enriched in basic and acidic residues; the sequence is KQRQVAEEEAGKRRRTESQL. The tract at residues 905 to 933 is disordered; that stretch reads KQRQVAEEEAGKRRRTESQLEKSSQAMRE. 9 Plectin repeats span residues 1369-1406, 1407-1445, 1446-1483, 1571-1609, 1610-1647, 1685-1723, 1783-1811, 1992-2029, and 2068-2106; these read LLEA…DKKQ, LLIA…TLRL, LQAQ…YQAL, YLRG…TLEL, LEAQ…KDKL, LLEA…NQIL, IVDP…FLEL, LLEA…MANR, and FLEF…AQRL. A compositionally biased stretch (polar residues) spans 2155 to 2164; sequence ISSPYNLSNP. The disordered stretch occupies residues 2155–2207; sequence ISSPYNLSNPGSASGSRSGSRRGSVDYSLSPSSSSRYSSFSYSRTSFSSRSLS. A compositionally biased stretch (low complexity) spans 2165-2207; sequence GSASGSRSGSRRGSVDYSLSPSSSSRYSSFSYSRTSFSSRSLS.

This sequence belongs to the plakin or cytolinker family.

It is found in the cell junction. It localises to the desmosome. Its subcellular location is the cell membrane. Functionally, involved in the organization of desmosome cell-cell junctions. Of particular importance in cell adhesion in the skin and during cardiac development. May also play a role in the regulation of Wnt, TGF-beta and Hippo signaling pathways. The sequence is that of Desmoplakin-B from Danio rerio (Zebrafish).